Reading from the N-terminus, the 626-residue chain is ATP-dependent zinc metalloprotease FtsH (626 aa).

Over 1-5 (MNFRN) the chain is Cytoplasmic. The chain crosses the membrane as a helical span at residues 6–26 (LAIWLVIVAVLGGVFVVSQNS). Residues 27 to 98 (RTKSSSEISY…DVKFKSGSIS (72 aa)) are Periplasmic-facing. Residues 99 to 119 (FLAILVQLLPILLVVGVWLFL) traverse the membrane as a helical segment. Residues 120–626 (MRQMQGGAKG…SPGAGASVTA (507 aa)) lie on the Cytoplasmic side of the membrane. 191-198 (GPPGTGKT) contacts ATP. Residue H413 coordinates Zn(2+). The active site involves E414. The Zn(2+) site is built by H417 and D491.

It in the central section; belongs to the AAA ATPase family. This sequence in the C-terminal section; belongs to the peptidase M41 family. Homohexamer. Requires Zn(2+) as cofactor.

The protein resides in the cell inner membrane. In terms of biological role, acts as a processive, ATP-dependent zinc metallopeptidase for both cytoplasmic and membrane proteins. Plays a role in the quality control of integral membrane proteins. Its function is as follows. Absence of FtsH leads to increased sigma-32 levels, which suggests, in analogy to E.coli, that sigma-32 is a substrate for FtsH. May play a role in the general stress response, as overexpression leads to improved resistance to salt stress. This chain is ATP-dependent zinc metalloprotease FtsH, found in Caulobacter vibrioides (strain NA1000 / CB15N) (Caulobacter crescentus).